We begin with the raw amino-acid sequence, 347 residues long: MDYKTSGVDIKAGREFVSEIKQSVESTYSSNVLEGIGGFGGLFKIPLEGLKKPVLVSGTDGVGTKLELAQIKNFHFEVGIDLVAMCMNDIITTGAKPLFFLDYIATGKLEKNQLLEVINGIAHSCRENKCSILGGETAEMPGFYSKNKYDLAGFCVGIADEEKLINGKKICENDLIIALQSNGMHSNGFSLVRKIIENNNQIDKQFEKKYNLDFYDELLKPTKIYFKIVNQILSQNIQIKGMSHITGGGIPENLPRCMSSDFIPYIDKKSWKIPVLFEFLKDVGQIPEKDFWNTFNLGVGFCLIIDKKYKDKILNICNAFDISSWVLGKVLKKNNSKENNFLPEIII.

Belongs to the AIR synthase family.

It localises to the cytoplasm. The catalysed reaction is 2-formamido-N(1)-(5-O-phospho-beta-D-ribosyl)acetamidine + ATP = 5-amino-1-(5-phospho-beta-D-ribosyl)imidazole + ADP + phosphate + H(+). The protein operates within purine metabolism; IMP biosynthesis via de novo pathway; 5-amino-1-(5-phospho-D-ribosyl)imidazole from N(2)-formyl-N(1)-(5-phospho-D-ribosyl)glycinamide: step 2/2. The sequence is that of Phosphoribosylformylglycinamidine cyclo-ligase from Prochlorococcus marinus subsp. pastoris (strain CCMP1986 / NIES-2087 / MED4).